The following is a 252-amino-acid chain: Ditrans,polycis-undecaprenyl-diphosphate synthase ((2E,6E)-farnesyl-diphosphate specific) (252 aa).

Aspartate 24 is a catalytic residue. Aspartate 24 contributes to the Mg(2+) binding site. Residues 25-28 (GNGR), tryptophan 29, arginine 37, histidine 41, and 69-71 (SSE) each bind substrate. The Proton acceptor role is filled by asparagine 72. Positions 73, 75, and 192 each coordinate substrate. Histidine 197 is a binding site for Mg(2+). Substrate is bound at residue 198–200 (RIS). Mg(2+) is bound at residue glutamate 211.

The protein belongs to the UPP synthase family. As to quaternary structure, homodimer. Mg(2+) is required as a cofactor.

It carries out the reaction 8 isopentenyl diphosphate + (2E,6E)-farnesyl diphosphate = di-trans,octa-cis-undecaprenyl diphosphate + 8 diphosphate. In terms of biological role, catalyzes the sequential condensation of isopentenyl diphosphate (IPP) with (2E,6E)-farnesyl diphosphate (E,E-FPP) to yield (2Z,6Z,10Z,14Z,18Z,22Z,26Z,30Z,34E,38E)-undecaprenyl diphosphate (di-trans,octa-cis-UPP). UPP is the precursor of glycosyl carrier lipid in the biosynthesis of bacterial cell wall polysaccharide components such as peptidoglycan and lipopolysaccharide. This chain is Ditrans,polycis-undecaprenyl-diphosphate synthase ((2E,6E)-farnesyl-diphosphate specific), found in Yersinia pestis.